We begin with the raw amino-acid sequence, 1011 residues long: Vacuolar membrane protease (1011 aa).

Residues 1–14 lie on the Cytoplasmic side of the membrane; it reads MKLTKAVFRFRRTN. A helical transmembrane segment spans residues 15-35; the sequence is LSTLLVITYLVITTLYVWDHF. Topologically, residues 36–352 are vacuolar; that stretch reads RYHFTLPSDY…WFVVWSARSL (317 aa). Positions 149, 161, 194, 219, and 293 each coordinate Zn(2+). Residues 353–373 form a helical membrane-spanning segment; sequence FYWNCIILALFPSILAILFLV. The Cytoplasmic segment spans residues 374-390; the sequence is AYDMQLLKFNFWDAMLR. Residues 391–411 traverse the membrane as a helical segment; that stretch reads LPVSVCLAYFCVKLFQVLVGQ. Residues 412-420 lie on the Vacuolar side of the membrane; the sequence is LNPYVFSRD. Residues 421-441 traverse the membrane as a helical segment; the sequence is YVSPILAEASMFIFMNYVILS. Over 442–451 the chain is Cytoplasmic; the sequence is SWERLRPLRD. A helical membrane pass occupies residues 452–472; the sequence is FKTVALVEVSMVLWIYLISVT. Residues 473–487 are Vacuolar-facing; it reads RWLRDSDYTATGLYP. A helical transmembrane segment spans residues 488-508; sequence FTIGYTFVSIGAIIGVFCATF. Over 509 to 647 the chain is Cytoplasmic; the sequence is KAKLNPEDDS…SILNYDWSIQ (139 aa). The segment at 534–585 is disordered; sequence MQHQYQQHSQKHSNQHSPHHSTHHSAQHSVHHSPRQSIHQVPSSEQRQRDAS. Residues 542-567 show a composition bias toward basic residues; sequence SQKHSNQHSPHHSTHHSAQHSVHHSP. The segment covering 568-578 has biased composition (polar residues); that stretch reads RQSIHQVPSSE. The helical transmembrane segment at 648–668 threads the bilayer; it reads FMVVTPWVTYFTWICLDLIMG. At 669–681 the chain is on the vacuolar side; that stretch reads AMNQTIQESAKGT. N-linked (GlcNAc...) asparagine glycosylation occurs at Asn-671. A helical membrane pass occupies residues 682-702; the sequence is TFVTHMALIGSLLLSLPMLPF. At 703-708 the chain is on the cytoplasmic side; sequence TYKLHS. Residues 709–729 form a helical membrane-spanning segment; it reads FAGMLFLLLAVTTAVWTIVAP. Over 730 to 1011 the chain is Vacuolar; the sequence is PFTESSPLKL…MVSVTKYVEL (282 aa). N-linked (GlcNAc...) asparagine glycans are attached at residues Asn-751, Asn-825, and Asn-854.

The protein belongs to the peptidase M28 family. Requires Zn(2+) as cofactor.

It is found in the vacuole membrane. Functionally, may be involved in vacuolar sorting and osmoregulation. The sequence is that of Vacuolar membrane protease from Eremothecium gossypii (strain ATCC 10895 / CBS 109.51 / FGSC 9923 / NRRL Y-1056) (Yeast).